The primary structure comprises 652 residues: RNA-binding KH domain-containing protein RCF3 (652 aa).

Residues 1–14 (MERSRSKRNYHYDQ) are compositionally biased toward basic and acidic residues. Positions 1–63 (MERSRSKRNY…NGRPSKSHPE (63 aa)) are disordered. Residues 34-55 (FGGGGGGNNRYRGGGGGGGGNG) show a composition bias toward gly residues. KH domains lie at 67–139 (TTTY…QEAL) and 175–245 (RVVT…LAIV). Positions 253–307 (QHRDRSNFQGRSHSPERSFAAAGDDYMPQLRRQSSDRFPRGNFRNNNFSSRQSNY) are disordered. Residues 292 to 306 (RGNFRNNNFSSRQSN) are compositionally biased toward low complexity. 3 consecutive KH domains span residues 324–391 (ELVF…QEAL), 408–476 (LITT…LVEL), and 576–640 (RSTL…QSLL).

In terms of assembly, homodimer. Interacts with CPL1. Interacts with RS40 and RS41. Interacts with DRB1/HYL1 and SE. Interacts with CPL2. In terms of tissue distribution, expressed in roots, cotyledons, leaves, flowers and siliques.

Its subcellular location is the nucleus. It is found in the nucleus speckle. Acts as a negative regulator of osmotic stress-induced gene expression. Involved in the regulation of thermotolerance responses under heat stress. Functions as an upstream regulator of heat stress transcription factor (HSF) genes. Negatively regulates HSFA1A, HSFA1B and HSFA1D, but positively controls the expression of HSFA1E, HSFA3, HSFA9, HSFB3, and DREB2C. Forms a complex with CPL1 that modulates co-transcriptional processes such as mRNA capping and polyadenylation, and functions to repress stress-inducible gene expression. Regulates pre-mRNA processing under salt stress. Involved in primary miRNA processing and pri-miRNA biogenesis. Binds both intronless and intron-containing pri-miRNAs. Acts as a regulator of biotic stress response gene expression and basal JA-mediated responses involved in defense. Acts as a negative regulator of resistance to the fungal pathogen Fusarium oxysporum. The polypeptide is RNA-binding KH domain-containing protein RCF3 (Arabidopsis thaliana (Mouse-ear cress)).